Here is an 86-residue protein sequence, read N- to C-terminus: UPF0367 protein NATL1_01981 (86 aa).

The protein belongs to the UPF0367 family.

This chain is UPF0367 protein NATL1_01981, found in Prochlorococcus marinus (strain NATL1A).